The sequence spans 168 residues: MGRIAALTRNPVMIALVAMLAIAGCASKKTPNNAADLGLNGAGAATPGSAQDFTVNIGDRIFFDTDSSSIRADAQTTLARQAQWLNQYKQYAIVVEGHADERGTREYNLALGARRAAAARDFLVSKGVASSRLKTISYGKERPVAVCDDISCWSQNRRAVTTLSGAGS.

Positions 1-24 are cleaved as a signal peptide; that stretch reads MGRIAALTRNPVMIALVAMLAIAG. A lipid anchor (N-palmitoyl cysteine) is attached at C25. The S-diacylglycerol cysteine moiety is linked to residue C25. The region spanning 50–167 is the OmpA-like domain; that stretch reads AQDFTVNIGD…RAVTTLSGAG (118 aa).

The protein belongs to the Pal lipoprotein family. As to quaternary structure, the Tol-Pal system is composed of five core proteins: the inner membrane proteins TolA, TolQ and TolR, the periplasmic protein TolB and the outer membrane protein Pal. They form a network linking the inner and outer membranes and the peptidoglycan layer.

The protein localises to the cell outer membrane. In terms of biological role, part of the Tol-Pal system, which plays a role in outer membrane invagination during cell division and is important for maintaining outer membrane integrity. The sequence is that of Peptidoglycan-associated lipoprotein from Mesorhizobium japonicum (strain LMG 29417 / CECT 9101 / MAFF 303099) (Mesorhizobium loti (strain MAFF 303099)).